Reading from the N-terminus, the 465-residue chain is UPF0324 membrane protein CC_0425 (465 aa).

The interval 97–132 (HRQPDRAPPARASEQPLRQGRRALRRRPDQRRHRPR) is disordered. Basic residues predominate over residues 115 to 132 (QGRRALRRRPDQRRHRPR). Helical transmembrane passes span 135 to 157 (AAAL…LMAV), 172 to 194 (LLAV…GAGL), 219 to 241 (AALG…GIGA), 251 to 273 (LAEA…LAAS), 286 to 308 (TALV…PPIA), 318 to 340 (AGVF…ASVS), 352 to 374 (LSRI…RTAQ), 378 to 400 (ISGL…ARGL), 405 to 427 (PALV…GAIS), and 442 to 464 (LAIL…TRIF).

This sequence belongs to the UPF0324 family.

It is found in the cell membrane. The chain is UPF0324 membrane protein CC_0425 from Caulobacter vibrioides (strain ATCC 19089 / CIP 103742 / CB 15) (Caulobacter crescentus).